The chain runs to 1415 residues: DNA-directed RNA polymerase subunit beta'' (1415 aa).

The Zn(2+) site is built by Cys217, Cys291, Cys298, and Cys301.

It belongs to the RNA polymerase beta' chain family. RpoC2 subfamily. As to quaternary structure, in plastids the minimal PEP RNA polymerase catalytic core is composed of four subunits: alpha, beta, beta', and beta''. When a (nuclear-encoded) sigma factor is associated with the core the holoenzyme is formed, which can initiate transcription. The cofactor is Zn(2+).

It localises to the plastid. The protein localises to the chloroplast. The enzyme catalyses RNA(n) + a ribonucleoside 5'-triphosphate = RNA(n+1) + diphosphate. In terms of biological role, DNA-dependent RNA polymerase catalyzes the transcription of DNA into RNA using the four ribonucleoside triphosphates as substrates. This Phaeodactylum tricornutum (strain CCAP 1055/1) protein is DNA-directed RNA polymerase subunit beta''.